The following is a 305-amino-acid chain: Transcriptional activator protein PfeR (305 aa).

Positions 79-192 constitute a Response regulatory domain; that stretch reads RLLLVEDDPR…ELDARTDALL (114 aa). Residue Asp128 is modified to 4-aspartylphosphate. The ompR/PhoB-type DNA-binding region spans 200–301; the sequence is LPLAQRRDTR…VRGQGYLLVE (102 aa).

Post-translationally, phosphorylated by PfeS.

It localises to the cytoplasm. Member of the two-component regulatory system PfeR/PfeS. Activates expression of the ferric enterobactin receptor. This chain is Transcriptional activator protein PfeR (pfeR), found in Pseudomonas aeruginosa (strain ATCC 15692 / DSM 22644 / CIP 104116 / JCM 14847 / LMG 12228 / 1C / PRS 101 / PAO1).